Here is a 338-residue protein sequence, read N- to C-terminus: Cilia- and flagella-associated protein 36 (338 aa).

Residues 142–179 are a coiled coil; that stretch reads ISDLEQEEMKLVSEALRLSKEEYEREQLRRSAKELNCT. Disordered regions lie at residues 175–220 and 281–314; these read ELNC…ESPY and KKQE…KKSL. Residues 187-202 show a composition bias toward polar residues; the sequence is KQSNGSERTPSNTELP. Residues 255–330 adopt a coiled-coil conformation; that stretch reads NLSQAEKEQL…AEKLKEEVIL (76 aa).

Belongs to the CFAP36 family.

Its subcellular location is the nucleus. It is found in the cytoplasm. It localises to the cell projection. The protein resides in the cilium. The protein localises to the flagellum. This Xenopus laevis (African clawed frog) protein is Cilia- and flagella-associated protein 36.